Consider the following 240-residue polypeptide: uncharacterized protein (240 aa).

This is an uncharacterized protein from Acidianus two-tailed virus (ATV).